Consider the following 204-residue polypeptide: MEWSLAEDDALAYSPLFLPNFRPFPMRVYLTGFMASGKSTVGPEAAARLGQPFLDLDRLITAHAGRSIPALFAEEGEARFRELERDLLRRTATTDDLVVALGGGALLDDANRAFAKEHGLVLYLEAPVDTLLGRVTGDDTRRPLLEDDTGTRLPRDEQRTRIEAMLDERRPAYEAAHHTLDADRPVEEVVGRIVEVVTAQAEPA.

35–40 (ASGKST) is an ATP binding site. S39 is a Mg(2+) binding site. Positions 57, 81, and 103 each coordinate substrate. R142 is a binding site for ATP. Residue R169 coordinates substrate.

Belongs to the shikimate kinase family. In terms of assembly, monomer. Mg(2+) serves as cofactor.

The protein localises to the cytoplasm. The catalysed reaction is shikimate + ATP = 3-phosphoshikimate + ADP + H(+). It participates in metabolic intermediate biosynthesis; chorismate biosynthesis; chorismate from D-erythrose 4-phosphate and phosphoenolpyruvate: step 5/7. In terms of biological role, catalyzes the specific phosphorylation of the 3-hydroxyl group of shikimic acid using ATP as a cosubstrate. This is Shikimate kinase from Salinibacter ruber (strain DSM 13855 / M31).